A 444-amino-acid chain; its full sequence is Dihydroorotate dehydrogenase (quinone), mitochondrial (444 aa).

Residues 34-56 traverse the membrane as a helical segment; that stretch reads GGASRYIIGTASVLVGAMAGFYI. FMN is bound by residues 124 to 128 and Thr-148; that span reads AGLDK. Residue Lys-128 coordinates substrate. 173–177 provides a ligand contact to substrate; that stretch reads NRYGF. The FMN site is built by Asn-220 and Asn-250. A substrate-binding site is contributed by 250–255; the sequence is NVSSPN. The active-site Nucleophile is the Ser-253. 2 residues coordinate FMN: Lys-301 and Ser-329. 330 to 331 lines the substrate pocket; it reads NT. Residues Gly-355, Gly-385, and 406–407 contribute to the FMN site; that span reads YT.

It belongs to the dihydroorotate dehydrogenase family. Type 2 subfamily. FMN serves as cofactor.

The protein localises to the mitochondrion inner membrane. It carries out the reaction (S)-dihydroorotate + a quinone = orotate + a quinol. It participates in pyrimidine metabolism; UMP biosynthesis via de novo pathway; orotate from (S)-dihydroorotate (quinone route): step 1/1. In terms of biological role, catalyzes the conversion of dihydroorotate to orotate with quinone as electron acceptor. This Eremothecium gossypii (strain ATCC 10895 / CBS 109.51 / FGSC 9923 / NRRL Y-1056) (Yeast) protein is Dihydroorotate dehydrogenase (quinone), mitochondrial (URA9).